The chain runs to 727 residues: Testis anion transporter 1 (727 aa).

Topologically, residues 1–23 are cytoplasmic; that stretch reads MLTIFPFLEWMCMYRLKDWLLGD. A helical transmembrane segment spans residues 24-44; the sequence is LLAGISVGLVQVPQGLTLSLL. Over 45–47 the chain is Extracellular; it reads ARQ. A helical membrane pass occupies residues 48–68; sequence LIPPLNIAYAAFCSSVIYVIF. Residues 69 to 74 are Cytoplasmic-facing; that stretch reads GSCHQM. The chain crosses the membrane as a helical span at residues 75-95; that stretch reads SIGSFFLVSALLINVLKISPL. Residues 96 to 130 are Extracellular-facing; the sequence is NNGHLVMGSFLKDEFSAPSYLMGYNKSLSVVATTT. A glycan (N-linked (GlcNAc...) asparagine) is linked at Asn120. The helical transmembrane segment at 131–151 threads the bilayer; that stretch reads FLTGIIQLIMGVLGLGFIATY. Residues 152–160 are Cytoplasmic-facing; sequence LPESAMSAY. A helical transmembrane segment spans residues 161-181; it reads LAAVALHIMLSQLTCIFGIMI. Residues 182–198 are Extracellular-facing; the sequence is SFHAGPISFFYDIINYC. A helical membrane pass occupies residues 199-219; it reads VALPKANSTSILLFLTVVVAL. The Cytoplasmic segment spans residues 220–235; sequence RINKCIRISFNQYPIE. A helical transmembrane segment spans residues 236-256; sequence FPMELFLIIGFTVIGNKITMA. The Extracellular segment spans residues 257–283; it reads TETSQTLIDMIPYSFLFPVTPDFSVLP. A helical transmembrane segment spans residues 284–304; the sequence is KIILQAISLSLVSSFLLVFLG. At 305 to 360 the chain is on the cytoplasmic side; the sequence is KKIASLHNYSVNSNQDLIAIGLCNVVSSFFRSCVFTGAVARTIIQDKSGGRQQFAS. A helical transmembrane segment spans residues 361 to 381; it reads LVGAGVMLLLMVKMGHFFYAL. Residues 382–383 lie on the Extracellular side of the membrane; it reads PN. A helical transmembrane segment spans residues 384-404; the sequence is AVLAGIILSNVVPYLETISNL. Topologically, residues 405-424 are cytoplasmic; it reads PSLWRQDQYDCALWMMTFSS. Residues 425–445 form a helical membrane-spanning segment; it reads SIFLGLDIGLIISVVSAFFIT. Over 446–727 the chain is Extracellular; that stretch reads SVRSHRAKIL…LPSFHLQHIF (282 aa). Positions 471-722 constitute an STAS domain; sequence DYREIITIPG…NSLSRLPSFH (252 aa). The tract at residues 592–727 is interaction with RACGAP1; the sequence is TVSSMSQKNQ…LPSFHLQHIF (136 aa).

This sequence belongs to the SLC26A/SulP transporter (TC 2.A.53) family. Interacts with RACGAP1. Interacts with CFTR; stimulates anion transport activity of CFTR. N-glycosylated.

The protein resides in the membrane. The catalysed reaction is sulfate(out) + chloride(in) = sulfate(in) + chloride(out). The enzyme catalyses oxalate(in) + chloride(out) = oxalate(out) + chloride(in). In terms of biological role, antiporter that mediates the exchange of sulfate and oxalate against chloride ions across a membrane. Stimulates anion transport activity of CFTR. May cooperate with CFTR in the regulation of chloride and bicarbonate ions fluxes required for activation of the ADCY10/PKA pathway during sperm motility and sperm capacitation. May play a role in sperm tail differentiation and motility and hence male fertility. The chain is Testis anion transporter 1 from Macaca fascicularis (Crab-eating macaque).